Here is a 261-residue protein sequence, read N- to C-terminus: Tryptophan synthase alpha chain (261 aa).

Residues glutamate 47 and aspartate 58 each act as proton acceptor in the active site.

It belongs to the TrpA family. In terms of assembly, tetramer of two alpha and two beta chains.

The enzyme catalyses (1S,2R)-1-C-(indol-3-yl)glycerol 3-phosphate + L-serine = D-glyceraldehyde 3-phosphate + L-tryptophan + H2O. It participates in amino-acid biosynthesis; L-tryptophan biosynthesis; L-tryptophan from chorismate: step 5/5. Functionally, the alpha subunit is responsible for the aldol cleavage of indoleglycerol phosphate to indole and glyceraldehyde 3-phosphate. The sequence is that of Tryptophan synthase alpha chain from Neisseria meningitidis serogroup A / serotype 4A (strain DSM 15465 / Z2491).